The sequence spans 121 residues: Glycine cleavage system H protein (121 aa).

Residues 16-98 (VATIGITAHA…EAGGWFAKVR (83 aa)) enclose the Lipoyl-binding domain. Residue K57 is modified to N6-lipoyllysine.

It belongs to the GcvH family. In terms of assembly, the glycine cleavage system is composed of four proteins: P, T, L and H. The cofactor is (R)-lipoate.

Functionally, the glycine cleavage system catalyzes the degradation of glycine. The H protein shuttles the methylamine group of glycine from the P protein to the T protein. The sequence is that of Glycine cleavage system H protein from Phenylobacterium zucineum (strain HLK1).